The following is a 366-amino-acid chain: 3-dehydroquinate synthase (366 aa).

Residues 75 to 80, 109 to 113, 133 to 134, Lys146, Lys155, and 173 to 176 each bind NAD(+); these read DGEEYK, GVVGD, TT, and TLDT. Positions 188, 251, and 268 each coordinate Zn(2+).

It belongs to the sugar phosphate cyclases superfamily. Dehydroquinate synthase family. Requires Co(2+) as cofactor. Zn(2+) is required as a cofactor. The cofactor is NAD(+).

The protein resides in the cytoplasm. It catalyses the reaction 7-phospho-2-dehydro-3-deoxy-D-arabino-heptonate = 3-dehydroquinate + phosphate. It functions in the pathway metabolic intermediate biosynthesis; chorismate biosynthesis; chorismate from D-erythrose 4-phosphate and phosphoenolpyruvate: step 2/7. Functionally, catalyzes the conversion of 3-deoxy-D-arabino-heptulosonate 7-phosphate (DAHP) to dehydroquinate (DHQ). The chain is 3-dehydroquinate synthase from Nitrosospira multiformis (strain ATCC 25196 / NCIMB 11849 / C 71).